The following is a 291-amino-acid chain: MTALNWKPFIYGGLASITAECGTFPIDLTKTRLQVQGQPNDAKYKEIRYRGMMHAIVRIWREEGVKALYSGIAPAMLRQASYGTIKIGTYQSLKRLFVDCPEDETLVLNAFCGVLSGVVSSCIANPTDVLKIRMQAQGNVMQGGMIVNFINIYQQEGTRGLWKGVSLTAQRAAIVVGVELPVYDITKKHLILSGLMGDTVYTHFLSSFTCGLAGALASNPVDVVRTRMMNQRSIRDASNSSYKGTLDCLLQTWKNEGFFALYKGFWPNWLRLGPWNIIFFITYEQLKKLNL.

3 Solcar repeats span residues 7-96, 104-189, and 198-289; these read KPFI…LKRL, ETLV…TKKH, and DTVY…LKKL. Transmembrane regions (helical) follow at residues 9 to 26, 71 to 89, 106 to 124, 164 to 183, 204 to 224, and 264 to 283; these read FIYG…TFPI, GIAP…KIGT, LVLN…SCIA, GVSL…LPVY, FLSS…VDVV, and GFWP…FITY.

It belongs to the mitochondrial carrier (TC 2.A.29) family.

The protein localises to the mitochondrion inner membrane. It carries out the reaction sulfite(in) + sulfate(out) = sulfite(out) + sulfate(in). The catalysed reaction is thiosulfate(in) + sulfate(out) = thiosulfate(out) + sulfate(in). It catalyses the reaction sulfate(out) + phosphate(in) = sulfate(in) + phosphate(out). The enzyme catalyses oxalate(in) + sulfate(out) = oxalate(out) + sulfate(in). It carries out the reaction malonate(in) + sulfate(out) = malonate(out) + sulfate(in). The catalysed reaction is maleate(in) + sulfate(out) = maleate(out) + sulfate(in). It catalyses the reaction (S)-malate(in) + sulfate(out) = (S)-malate(out) + sulfate(in). The enzyme catalyses (3S)-citramalate(in) + sulfate(out) = (3S)-citramalate(out) + sulfate(in). It carries out the reaction (3R)-citramalate(in) + sulfate(out) = (3R)-citramalate(out) + sulfate(in). The catalysed reaction is sulfate(out) + succinate(in) = sulfate(in) + succinate(out). It catalyses the reaction (S,S)-tartrate(in) + sulfate(out) = (S,S)-tartrate(out) + sulfate(in). The enzyme catalyses (2R,3R)-tartrate(in) + sulfate(out) = (2R,3R)-tartrate(out) + sulfate(in). It carries out the reaction D-aspartate(in) + sulfate(out) = D-aspartate(out) + sulfate(in). The catalysed reaction is L-aspartate(in) + sulfate(out) = L-aspartate(out) + sulfate(in). It catalyses the reaction sulfate(in) = sulfate(out). The enzyme catalyses phosphate(in) = phosphate(out). It carries out the reaction (S)-malate(out) = (S)-malate(in). Probable transporter. Its function is as follows. Antiporter that transports inorganic anions (sulfate, sulfite, thiosulfate and phosphate) and, to a lesser extent, a variety of dicarboxylates (e.g. malonate, malate and citramalate) and, even more so, aspartate. The sulfate/sulfate exchange is much higher than the phosphate/phosphate and malate/malate exchanges. The transport affinities is higher for sulfate and thiosulfate than for any other substrate. May catalyze the export of sulfite and thiosulfate (the hydrogen sulfide degradation products) from the mitochondria, thereby modulating the level of the hydrogen sulfide. Also may mediate a very low unidirectional transport of sulfate, phosphate and (S)-malate. This Xenopus laevis (African clawed frog) protein is Kidney mitochondrial carrier protein 1.